We begin with the raw amino-acid sequence, 191 residues long: Adenine phosphoribosyltransferase (191 aa).

This sequence belongs to the purine/pyrimidine phosphoribosyltransferase family. In terms of assembly, homodimer.

The protein localises to the cytoplasm. It carries out the reaction AMP + diphosphate = 5-phospho-alpha-D-ribose 1-diphosphate + adenine. The protein operates within purine metabolism; AMP biosynthesis via salvage pathway; AMP from adenine: step 1/1. Catalyzes a salvage reaction resulting in the formation of AMP, that is energically less costly than de novo synthesis. The protein is Adenine phosphoribosyltransferase of Nocardia farcinica (strain IFM 10152).